The primary structure comprises 487 residues: NADH-quinone oxidoreductase subunit N (487 aa).

Helical transmembrane passes span 7-27 (ILGPALPEILLAVLGLVLLMV), 38-58 (LVGLLAVYGLLMALAVVGLGA), 79-99 (YAKALTLLGAVLTLLLSMVWL), 111-131 (ILVLFATIGMMMMISANDLIA), 164-184 (FVLGALASGLLLYGMSLVYGF), 207-227 (LLIGIVFIIAGLAFKVSAVPF), 238-258 (APTPVTAFFAVAPKIAALTLF), 276-296 (VIILISILSMLLGGFAAIVQT), 301-321 (LMAYSSIGHVGYALIGIAAGT), 328-348 (VLVYLAIYLFMNVGTFTVILA), 373-393 (AAAMAVFMFSMAGVPPLAGFF), 406-426 (GLFALAVIGVLSSVVAAFYYL), and 451-471 (VILIGTAAVVALFFLAPSVVV).

Belongs to the complex I subunit 2 family. In terms of assembly, NDH-1 is composed of 14 different subunits. Subunits NuoA, H, J, K, L, M, N constitute the membrane sector of the complex.

The protein localises to the cell inner membrane. It catalyses the reaction a quinone + NADH + 5 H(+)(in) = a quinol + NAD(+) + 4 H(+)(out). NDH-1 shuttles electrons from NADH, via FMN and iron-sulfur (Fe-S) centers, to quinones in the respiratory chain. The immediate electron acceptor for the enzyme in this species is believed to be ubiquinone. Couples the redox reaction to proton translocation (for every two electrons transferred, four hydrogen ions are translocated across the cytoplasmic membrane), and thus conserves the redox energy in a proton gradient. This Rhodospirillum rubrum (strain ATCC 11170 / ATH 1.1.1 / DSM 467 / LMG 4362 / NCIMB 8255 / S1) protein is NADH-quinone oxidoreductase subunit N.